The chain runs to 178 residues: Interleukin-10 (178 aa).

The N-terminal stretch at 1–18 (MHSSALLCYLVFLAGVGA) is a signal peptide. Intrachain disulfides connect Cys30–Cys126 and Cys80–Cys132. N-linked (GlcNAc...) asparagine glycosylation is present at Asn67. An N-linked (GlcNAc...) asparagine glycan is attached at Asn134.

It belongs to the IL-10 family. Homodimer. Interacts with IL10RA and IL10RB.

The protein localises to the secreted. Major immune regulatory cytokine that acts on many cells of the immune system where it has profound anti-inflammatory functions, limiting excessive tissue disruption caused by inflammation. Mechanistically, IL10 binds to its heterotetrameric receptor comprising IL10RA and IL10RB leading to JAK1 and STAT2-mediated phosphorylation of STAT3. In turn, STAT3 translocates to the nucleus where it drives expression of anti-inflammatory mediators. Targets antigen-presenting cells (APCs) such as macrophages and monocytes and inhibits their release of pro-inflammatory cytokines including granulocyte-macrophage colony-stimulating factor /GM-CSF, granulocyte colony-stimulating factor/G-CSF, IL-1 alpha, IL-1 beta, IL-6, IL-8 and TNF-alpha. Also interferes with antigen presentation by reducing the expression of MHC-class II and co-stimulatory molecules, thereby inhibiting their ability to induce T cell activation. In addition, controls the inflammatory response of macrophages by reprogramming essential metabolic pathways including mTOR signaling. In Equus caballus (Horse), this protein is Interleukin-10 (IL10).